Consider the following 364-residue polypeptide: MAHAWGPQRLAGGQPQANFEESTQGSIFTYTNSNSTRDPFEGPNYHIAPRWVYHLTSAWMVFVVIASVFTNGLVLAATMRFKKLRHPLNWILVNLAIADLAETIIASTISVVNQMYGYFVLGHPLCVVEGYTVSLCGITGLWSLAIISWERWMVVCKPFGNVRFDAKLAITGIAFSWIWAAVWTAPPIFGWSRYWPHGLKTSCGPDVFSGSSYPGVQSYMIVLMITCCFIPLSVIILCYLQVWLAIRAVAKQQKESESTQKAEKEVTRMVMVMIFAYCLCWGPYTFFACFAAAHPGYAFHPLVAALPAYFAKSATIYNPIIYVFMNRQFRNCILQLFGKKVDDSSELSSVSKTEASSVSSVSPA.

Residues 1–52 (MAHAWGPQRLAGGQPQANFEESTQGSIFTYTNSNSTRDPFEGPNYHIAPRWV) lie on the Extracellular side of the membrane. Residue serine 22 is glycosylated (O-linked (GlcNAc) serine). An N-linked (GlcNAc...) asparagine glycan is attached at asparagine 34. Residues 53-77 (YHLTSAWMVFVVIASVFTNGLVLAA) traverse the membrane as a helical segment. The Cytoplasmic segment spans residues 78–89 (TMRFKKLRHPLN). Residues 90–115 (WILVNLAIADLAETIIASTISVVNQM) form a helical membrane-spanning segment. The Extracellular portion of the chain corresponds to 116–129 (YGYFVLGHPLCVVE). A disulfide bridge connects residues cysteine 126 and cysteine 203. A helical transmembrane segment spans residues 130–149 (GYTVSLCGITGLWSLAIISW). Over 150–168 (ERWMVVCKPFGNVRFDAKL) the chain is Cytoplasmic. The chain crosses the membrane as a helical span at residues 169 to 192 (AITGIAFSWIWAAVWTAPPIFGWS). The Extracellular portion of the chain corresponds to 193–218 (RYWPHGLKTSCGPDVFSGSSYPGVQS). Residues 219-246 (YMIVLMITCCFIPLSVIILCYLQVWLAI) form a helical membrane-spanning segment. At 247-268 (RAVAKQQKESESTQKAEKEVTR) the chain is on the cytoplasmic side. Residues 269–292 (MVMVMIFAYCLCWGPYTFFACFAA) form a helical membrane-spanning segment. Over 293–300 (AHPGYAFH) the chain is Extracellular. The chain crosses the membrane as a helical span at residues 301–325 (PLVAALPAYFAKSATIYNPIIYVFM). N6-(retinylidene)lysine is present on lysine 312. Residues 326–364 (NRQFRNCILQLFGKKVDDSSELSSVSKTEASSVSSVSPA) are Cytoplasmic-facing.

Belongs to the G-protein coupled receptor 1 family. Opsin subfamily. Phosphorylated on some or all of the serine and threonine residues present in the C-terminal region. Expressed in retina (at protein level). Expressed in cone and/or rod photoreceptor cells (at protein level).

Its subcellular location is the membrane. In terms of biological role, visual pigments are the light-absorbing molecules that mediate vision. They consist of an apoprotein, opsin, covalently linked to cis-retinal. In Bos taurus (Bovine), this protein is Long-wave-sensitive opsin 1 (OPN1LW).